We begin with the raw amino-acid sequence, 138 residues long: Biopolymer transport protein exbD1 (138 aa).

At 1 to 16 (MIKSSAKHNDFGLTPD) the chain is on the cytoplasmic side. A helical transmembrane segment spans residues 17–37 (LTPLLDIIFIVMVFLLLTASV). Residues 38–138 (RLESLEVALP…TQLLTEPSHS (101 aa)) are Periplasmic-facing.

This sequence belongs to the ExbD/TolR family. In terms of assembly, the accessory proteins ExbB and ExbD seem to form a complex with TonB.

It is found in the cell inner membrane. Involved in the TonB-dependent energy-dependent transport of various receptor-bound substrates. The polypeptide is Biopolymer transport protein exbD1 (exbD1) (Vibrio cholerae serotype O1 (strain ATCC 39315 / El Tor Inaba N16961)).